A 259-amino-acid chain; its full sequence is Global transcriptional regulator CodY (259 aa).

Positions 1 to 155 (MTLLEKTRKI…GGTVVGMEIL (155 aa)) are GAF domain. The H-T-H motif DNA-binding region spans 203–222 (ASKIADRVGITRSVIVNALR).

The protein belongs to the CodY family.

It is found in the cytoplasm. Its function is as follows. DNA-binding global transcriptional regulator which is involved in the adaptive response to starvation and acts by directly or indirectly controlling the expression of numerous genes in response to nutrient availability. During rapid exponential growth, CodY is highly active and represses genes whose products allow adaptation to nutrient depletion. The polypeptide is Global transcriptional regulator CodY (Listeria welshimeri serovar 6b (strain ATCC 35897 / DSM 20650 / CCUG 15529 / CIP 8149 / NCTC 11857 / SLCC 5334 / V8)).